A 706-amino-acid chain; its full sequence is Paxillin-like protein 1 (706 aa).

Disordered stretches follow at residues E24 to L192, V222 to E258, A279 to E341, and I514 to A537. Positions P35 to A64 are enriched in polar residues. Phosphoserine occurs at positions 43 and 63. 2 stretches are compositionally biased toward low complexity: residues K73 to S86 and S117 to R129. Basic and acidic residues-rich tracts occupy residues P130–A150 and V222–S236. A compositionally biased stretch (acidic residues) spans S237–I252. The span at A279–I290 shows a compositional bias: basic and acidic residues. A compositionally biased stretch (polar residues) spans T296–A308. LIM zinc-binding domains lie at C556–H612 and C621–H672.

This is Paxillin-like protein 1 (PXL1) from Saccharomyces cerevisiae (strain ATCC 204508 / S288c) (Baker's yeast).